The chain runs to 259 residues: Ribosomal RNA small subunit methyltransferase A (259 aa).

S-adenosyl-L-methionine is bound by residues N13, L15, G39, E60, D84, and N101.

It belongs to the class I-like SAM-binding methyltransferase superfamily. rRNA adenine N(6)-methyltransferase family. RsmA subfamily.

The protein localises to the cytoplasm. It carries out the reaction adenosine(1518)/adenosine(1519) in 16S rRNA + 4 S-adenosyl-L-methionine = N(6)-dimethyladenosine(1518)/N(6)-dimethyladenosine(1519) in 16S rRNA + 4 S-adenosyl-L-homocysteine + 4 H(+). In terms of biological role, specifically dimethylates two adjacent adenosines (A1518 and A1519) in the loop of a conserved hairpin near the 3'-end of 16S rRNA in the 30S particle. May play a critical role in biogenesis of 30S subunits. The polypeptide is Ribosomal RNA small subunit methyltransferase A (Mesomycoplasma hyopneumoniae (strain 232) (Mycoplasma hyopneumoniae)).